A 564-amino-acid chain; its full sequence is Multidrug resistance protein 1 (564 aa).

At 1-115 the chain is on the cytoplasmic side; sequence MHYRFLRDSF…NPQNWPTLQK (115 aa). A disordered region spans residues 60-101; sequence IDNQGEPNSSQSSSSNNTIVDNNNNNDNDVDGDKIVVTWDGD. Low complexity predominate over residues 67–86; it reads NSSQSSSSNNTIVDNNNNND. Residues 116-136 form a helical membrane-spanning segment; that stretch reads AFFIFQISFLTTSVYMGSAVY. At 137-151 the chain is on the extracellular side; that stretch reads TPGIEELMHDFGIGR. The helical transmembrane segment at 152–172 threads the bilayer; sequence VVATLPLTLFVIGYGVGPLVF. Over 173 to 183 the chain is Cytoplasmic; it reads SPMSENAIFGR. A helical transmembrane segment spans residues 184–204; that stretch reads TSIYIITLFLFVILQIPTALV. Over 205–206 the chain is Extracellular; the sequence is NN. Residues 207–227 form a helical membrane-spanning segment; the sequence is IAGLCILRFLGGFFASPCLAT. Residues 228-242 lie on the Cytoplasmic side of the membrane; the sequence is GGASVADVVKFWNLP. The chain crosses the membrane as a helical span at residues 243 to 263; sequence VGLAAWSLGAVCGPSFGPFFG. Residues 264 to 273 are Extracellular-facing; that stretch reads SILTVKASWR. Residues 274-294 traverse the membrane as a helical segment; sequence WTFWFMCIISGFSFVMLCFTL. At 295-350 the chain is on the cytoplasmic side; it reads PETFGKTLLYRKAKRLRAITGNDRITSEGEVENSKMTSHELIIDTLWRPLEITVME. A helical transmembrane segment spans residues 351 to 371; sequence PVVLLINIYIAMVYSILYLFF. At 372–390 the chain is on the extracellular side; that stretch reads EVFPIYFVGVKHFTLVELG. The chain crosses the membrane as a helical span at residues 391–411; it reads TTYMSIVIGIVIAAFIYIPVI. Over 412–428 the chain is Cytoplasmic; sequence RQKFTKPILRQEQVFPE. A helical membrane pass occupies residues 429 to 449; that stretch reads VFIPIAIVGGILLTSGLFIFG. Residues 450–455 lie on the Extracellular side of the membrane; sequence WSANRT. Residue Asn453 is glycosylated (N-linked (GlcNAc...) asparagine). A helical membrane pass occupies residues 456 to 476; that stretch reads THWVGPLFGAATTASGAFLIF. The Cytoplasmic portion of the chain corresponds to 477 to 503; the sequence is QTLFNFMGASFKPHYIASVFASNDLFR. Residues 504–524 form a helical membrane-spanning segment; that stretch reads SVIASVFPLFGAPLFDNLATP. At 525-528 the chain is on the extracellular side; sequence EYPV. A helical transmembrane segment spans residues 529-549; that stretch reads AWGSSVLGFITLVMIAIPVLF. Topologically, residues 550–564 are cytoplasmic; the sequence is YLNGPKLRARSKYAN.

This sequence belongs to the major facilitator superfamily. CAR1 family.

Its subcellular location is the cell membrane. Its function is as follows. Plasma membrane multidrug efflux pump that confers resistance to numerous chemicals including azoles such as fluconazole, voriconazole, and benztriazoles, as well as to benomyl, cycloheximide, methotrexate, 4-nitroquinoline-N-oxide, sulfometuron methyl, cerulenin, and brefeldin A. The chain is Multidrug resistance protein 1 from Candida albicans (strain SC5314 / ATCC MYA-2876) (Yeast).